The following is a 159-amino-acid chain: Large ribosomal subunit protein uL15 (159 aa).

A compositionally biased stretch (basic and acidic residues) spans 1–18 (MKLNEIKDNEGSSKDRIR). Residues 1–39 (MKLNEIKDNEGSSKDRIRVGRGIGSGKGKTGGRGVKGQK) form a disordered region. Positions 21-35 (RGIGSGKGKTGGRGV) are enriched in gly residues.

It belongs to the universal ribosomal protein uL15 family. As to quaternary structure, part of the 50S ribosomal subunit.

In terms of biological role, binds to the 23S rRNA. The polypeptide is Large ribosomal subunit protein uL15 (Allorhizobium ampelinum (strain ATCC BAA-846 / DSM 112012 / S4) (Agrobacterium vitis (strain S4))).